The following is a 77-amino-acid chain: Large ribosomal subunit protein bL28 (77 aa).

This sequence belongs to the bacterial ribosomal protein bL28 family.

This chain is Large ribosomal subunit protein bL28, found in Ralstonia pickettii (strain 12J).